Consider the following 172-residue polypeptide: Adenine phosphoribosyltransferase (172 aa).

This sequence belongs to the purine/pyrimidine phosphoribosyltransferase family. Homodimer.

It is found in the cytoplasm. It carries out the reaction AMP + diphosphate = 5-phospho-alpha-D-ribose 1-diphosphate + adenine. The protein operates within purine metabolism; AMP biosynthesis via salvage pathway; AMP from adenine: step 1/1. Functionally, catalyzes a salvage reaction resulting in the formation of AMP, that is energically less costly than de novo synthesis. This Clostridium kluyveri (strain NBRC 12016) protein is Adenine phosphoribosyltransferase.